A 1368-amino-acid chain; its full sequence is Protein suppressor 2 of zeste (1368 aa).

The RING-type zinc-finger motif lies at 35 to 74; sequence CRLCRGYMIDPTTVDYCYHTYCRSCILKHLLRAVYCPECK. 10 disordered regions span residues 245–321, 448–628, 640–718, 861–903, 935–1001, 1057–1103, 1116–1141, 1161–1193, 1211–1271, and 1298–1322; these read SRIN…FKSL, QPLQ…QQQQ, TLPT…AVPQ, AGGK…KRSC, ALSG…NGTA, SANP…STSN, ISANSNGGPSTTSGSNSNGTTNGDDL, AASSGNGSGSTSSSSAKPKNANALVRPQNASVR, STAA…KKPT, and VLSSNAAKSPELAKTTTAVALRPEP. Positions 449-461 are enriched in polar residues; that stretch reads PLQQSASNPDSKY. The span at 462–495 shows a compositional bias: low complexity; the sequence is SPNASPMSSCSSSTNGSSSSLGTADASTSTSTSS. A compositionally biased stretch (basic residues) spans 496 to 506; the sequence is SHRKRKKKHSK. 2 stretches are compositionally biased toward low complexity: residues 599-628 and 672-689; these read AEPEQQQQQQQQQQQPQQQQQQQQQQQQQQ and PKQQQQQMPQQPQAVLQQ. Composition is skewed to polar residues over residues 936-953 and 962-977; these read LSGQRNNKGNSSNSNAYR and LRNTAAPQHSFPSKSS. Low complexity-rich tracts occupy residues 1078–1099, 1119–1138, 1161–1183, and 1231–1263; these read NNNNNNNNNNNNNNNNNNNNNN, NSNGGPSTTSGSNSNGTTNG, AASSGNGSGSTSSSSAKPKNANA, and STSNPGSLSPTNTSSSSSSSSSGSSGCSAATSP.

The protein resides in the nucleus. Its function is as follows. Regulates expression of the homeotic selector genes by influencing higher-order chromatin structure through interaction with other proteins. The chain is Protein suppressor 2 of zeste (Su(z)2) from Drosophila melanogaster (Fruit fly).